The primary structure comprises 161 residues: Phosphopantetheine adenylyltransferase (161 aa).

S10 serves as a coordination point for substrate. ATP is bound by residues S10–F11 and H18. Residues K42, A75, and R89 each contribute to the substrate site. ATP is bound by residues G90–R92, E100, and L125–S131.

The protein belongs to the bacterial CoaD family. As to quaternary structure, homohexamer. Requires Mg(2+) as cofactor.

The protein localises to the cytoplasm. It carries out the reaction (R)-4'-phosphopantetheine + ATP + H(+) = 3'-dephospho-CoA + diphosphate. It functions in the pathway cofactor biosynthesis; coenzyme A biosynthesis; CoA from (R)-pantothenate: step 4/5. Its function is as follows. Reversibly transfers an adenylyl group from ATP to 4'-phosphopantetheine, yielding dephospho-CoA (dPCoA) and pyrophosphate. This Streptococcus agalactiae serotype III (strain NEM316) protein is Phosphopantetheine adenylyltransferase.